Reading from the N-terminus, the 250-residue chain is Triosephosphate isomerase (250 aa).

Residue 9-11 (NWK) coordinates substrate. H94 acts as the Electrophile in catalysis. The active-site Proton acceptor is E166. Residues G172, S212, and 233-234 (GG) each bind substrate.

The protein belongs to the triosephosphate isomerase family. In terms of assembly, homodimer.

It is found in the cytoplasm. It catalyses the reaction D-glyceraldehyde 3-phosphate = dihydroxyacetone phosphate. Its pathway is carbohydrate biosynthesis; gluconeogenesis. It functions in the pathway carbohydrate degradation; glycolysis; D-glyceraldehyde 3-phosphate from glycerone phosphate: step 1/1. Involved in the gluconeogenesis. Catalyzes stereospecifically the conversion of dihydroxyacetone phosphate (DHAP) to D-glyceraldehyde-3-phosphate (G3P). The protein is Triosephosphate isomerase of Thermus thermophilus (strain ATCC 27634 / DSM 579 / HB8).